Here is an 81-residue protein sequence, read N- to C-terminus: Protein Vpu (81 aa).

Residues Met1–Ile6 are Extracellular-facing. The chain crosses the membrane as a helical span at residues Ala7–Ile27. Topologically, residues Glu28–Leu81 are cytoplasmic. Residues Ser52 and Ser56 each carry the phosphoserine; by host CK2 modification.

Belongs to the HIV-1 VPU protein family. In terms of assembly, homopentamer. Interacts with host CD4 and BRTC; these interactions induce proteasomal degradation of CD4. Interacts with host BST2; this interaction leads to the degradation of host BST2. Interacts with host FBXW11. Interacts with host AP1M1; this interaction plays a role in the mistrafficking and subsequent degradation of host BST2. Interacts with host RANBP2; this interaction allows Vpu to down-regulate host BLM sumoylation. In terms of processing, phosphorylated by host CK2. This phosphorylation is necessary for interaction with human BTRC and degradation of CD4.

The protein localises to the host membrane. Ion channel activity is inhibited by hexamethylene amiloride in vitro. Its function is as follows. Enhances virion budding by targeting host CD4 and Tetherin/BST2 to proteasome degradation. Degradation of CD4 prevents any unwanted premature interactions between viral Env and its host receptor CD4 in the endoplasmic reticulum. Degradation of antiretroviral protein Tetherin/BST2 is important for virion budding, as BST2 tethers new viral particles to the host cell membrane. Mechanistically, Vpu bridges either CD4 or BST2 to BTRC, a substrate recognition subunit of the Skp1/Cullin/F-box protein E3 ubiquitin ligase, induces their ubiquitination and subsequent proteasomal degradation. The alteration of the E3 ligase specificity by Vpu seems to promote the degradation of host IKBKB, leading to NF-kappa-B down-regulation and subsequent apoptosis. Acts as a viroporin that forms an oligomeric ion channel in membranes. Modulates the host DNA repair mechanisms to promote degradation of nuclear viral cDNA in cells that are already productively infected in order to suppress immune sensing and proviral hyper-integration (superinfection). Manipulates PML-NBs and modulates SUMOylation of host BLM protein thereby enhancing its DNA-end processing activity toward viral unintegrated linear DNA. Also inhibits RAD52-mediated homologous repair of viral cDNA, preventing the generation of dead-end circular forms of single copies of the long terminal repeat and permitting sustained nucleolytic attack. This is Protein Vpu from Human immunodeficiency virus type 1 group M subtype B (isolate BH10) (HIV-1).